The chain runs to 278 residues: Potassium/proton antiporter CemA (278 aa).

4 helical membrane-spanning segments follow: residues 61-81 (ILLLFISPVLVNQASKFFVFG), 155-175 (AVKNILSDLVSILVFILLMIT), 203-223 (IILFTDMFVGFHSPHGWEVII), and 238-258 (FIFLFISTFPVILDTIFKYWI).

Belongs to the CemA family.

It localises to the plastid. The protein localises to the chloroplast inner membrane. The enzyme catalyses K(+)(in) + H(+)(out) = K(+)(out) + H(+)(in). In terms of biological role, contributes to K(+)/H(+) antiport activity by supporting proton efflux to control proton extrusion and homeostasis in chloroplasts in a light-dependent manner to modulate photosynthesis. Prevents excessive induction of non-photochemical quenching (NPQ) under continuous-light conditions. Indirectly promotes efficient inorganic carbon uptake into chloroplasts. The chain is Potassium/proton antiporter CemA from Pyropia yezoensis (Susabi-nori).